A 509-amino-acid chain; its full sequence is Cytochrome P450 monooxygenase hepC (509 aa).

A helical transmembrane segment spans residues 5 to 25 (MIIPSFWTGTAIIGLVACAYV). Cysteine 454 contributes to the heme binding site. Asparagine 491 carries an N-linked (GlcNAc...) asparagine glycan.

It belongs to the cytochrome P450 family. Heme is required as a cofactor.

The protein resides in the membrane. Its pathway is secondary metabolite biosynthesis. Cytochrome P450 monooxygenase; part of the gene cluster that mediates the biosynthesis of heptelidic acid (HA), a sesquiterpene lactone that acts as an inhibitor of glyceraldehyde-3-phosphatedehydrogenase (GAPDH) and a growth inhibitor of the salt-tolerant lactic acid bacteria in soy sauce brewing. The polypeptide is Cytochrome P450 monooxygenase hepC (Aspergillus oryzae (strain ATCC 42149 / RIB 40) (Yellow koji mold)).